We begin with the raw amino-acid sequence, 314 residues long: Serine/threonine-protein phosphatase PP2A-5 catalytic subunit (314 aa).

Positions 62, 64, 90, and 122 each coordinate Mn(2+). His123 (proton donor) is an active-site residue. Positions 172 and 246 each coordinate Mn(2+).

The protein belongs to the PPP phosphatase family. PP-2A subfamily. Mn(2+) is required as a cofactor.

The protein localises to the cytoplasm. The catalysed reaction is O-phospho-L-seryl-[protein] + H2O = L-seryl-[protein] + phosphate. It carries out the reaction O-phospho-L-threonyl-[protein] + H2O = L-threonyl-[protein] + phosphate. The sequence is that of Serine/threonine-protein phosphatase PP2A-5 catalytic subunit (NPP5) from Nicotiana tabacum (Common tobacco).